Here is a 366-residue protein sequence, read N- to C-terminus: tRNA pseudouridine synthase B (366 aa).

Asp44 serves as the catalytic Nucleophile.

Belongs to the pseudouridine synthase TruB family. Type 1 subfamily.

It catalyses the reaction uridine(55) in tRNA = pseudouridine(55) in tRNA. In terms of biological role, responsible for synthesis of pseudouridine from uracil-55 in the psi GC loop of transfer RNAs. This chain is tRNA pseudouridine synthase B, found in Treponema pallidum (strain Nichols).